Here is a 301-residue protein sequence, read N- to C-terminus: Multifunctional dioxygenase prhA (301 aa).

Positions 130, 132, and 214 each coordinate Fe cation.

It belongs to the PhyH family. As to quaternary structure, homodimer. It depends on Fe cation as a cofactor.

The catalysed reaction is preaustinoid A1 + 2-oxoglutarate + O2 = berkeleyone B + succinate + CO2 + H2O. It carries out the reaction berkeleyone B + 2-oxoglutarate + O2 = berkeleydione + succinate + CO2 + H2O. The enzyme catalyses preaustinoid A + 2 2-oxoglutarate + 2 O2 = berkeleytrione + 2 succinate + 2 CO2 + H2O. The protein operates within secondary metabolite biosynthesis; terpenoid biosynthesis. Functionally, multifunctional dioxygenase; part of the gene cluster that mediates the biosynthesis of paraherquonin, a meroterpenoid with a unique, highly congested hexacyclic molecular architecture. The first step of the pathway is the synthesis of 3,5-dimethylorsellinic acid (DMOA) by the polyketide synthase prhL. Synthesis of DMOA is followed by farnesylation by the prenyltransferase prhE, methylesterification by the methyl-transferase prhM, epoxidation of the prenyl chain by the flavin-dependent monooxygenase prhF, and cyclization of the farnesyl moiety by the terpene cyclase prhH, to yield the tetracyclic intermediate, protoaustinoid A. The short chain dehydrogenase prhI then oxidizes the C-3 alcohol group of the terpene cyclase product to transform protoaustinoid A into protoaustinoid B. The FAD-binding monooxygenase prhJ catalyzes the oxidation of protoaustinoid B into preaustinoid A which is further oxidized into preaustinoid A1 by FAD-binding monooxygenase phrK. Finally, prhA leads to berkeleydione via the berkeleyone B intermediate. PrhA is a multifunctional dioxygenase that first desaturates at C5-C6 to form berkeleyone B, followed by rearrangement of the A/B-ring to form the cycloheptadiene moiety in berkeleydione. Berkeleydione serves as the key intermediate for the biosynthesis of paraherquonin as well as many other meroterpenoids. The cytochrome P450 monooxygenases prhB, prhD, and prhN, as well as the isomerase prhC, are probably involved in the late stage of paraherquonin biosynthesis, after the production of berkeleydione. Especially prhC might be a multifunctional enzyme that catalyzes the D-ring expansion via intramolecular methoxy rearrangement, as well as the hydrolysis of the expanded D-ring. This Penicillium brasilianum protein is Multifunctional dioxygenase prhA.